We begin with the raw amino-acid sequence, 560 residues long: Long-chain-fatty-acid--CoA ligase (560 aa).

This sequence belongs to the ATP-dependent AMP-binding enzyme family.

The enzyme catalyses a long-chain fatty acid + ATP + CoA = a long-chain fatty acyl-CoA + AMP + diphosphate. This Bacillus subtilis (strain 168) protein is Long-chain-fatty-acid--CoA ligase (lcfA).